The sequence spans 189 residues: Probable nicotinate-nucleotide adenylyltransferase (189 aa).

It belongs to the NadD family.

The enzyme catalyses nicotinate beta-D-ribonucleotide + ATP + H(+) = deamido-NAD(+) + diphosphate. Its pathway is cofactor biosynthesis; NAD(+) biosynthesis; deamido-NAD(+) from nicotinate D-ribonucleotide: step 1/1. Its function is as follows. Catalyzes the reversible adenylation of nicotinate mononucleotide (NaMN) to nicotinic acid adenine dinucleotide (NaAD). This is Probable nicotinate-nucleotide adenylyltransferase from Ruegeria sp. (strain TM1040) (Silicibacter sp.).